A 261-amino-acid chain; its full sequence is Small ribosomal subunit protein uS2 (261 aa).

This sequence belongs to the universal ribosomal protein uS2 family.

In Enterococcus faecalis (strain ATCC 700802 / V583), this protein is Small ribosomal subunit protein uS2.